Reading from the N-terminus, the 741-residue chain is Ion-translocating oxidoreductase complex subunit C (741 aa).

4Fe-4S ferredoxin-type domains follow at residues 369–397 (GEPQ…QQLY) and 407–436 (KATT…VQYF). Residues cysteine 377, cysteine 380, cysteine 383, cysteine 387, cysteine 416, cysteine 419, cysteine 422, and cysteine 426 each contribute to the [4Fe-4S] cluster site. Residues 627-654 (IARAKARKLEQQQQANAEPEEQVDPRKA) are disordered.

Belongs to the 4Fe4S bacterial-type ferredoxin family. RnfC subfamily. As to quaternary structure, the complex is composed of six subunits: RsxA, RsxB, RsxC, RsxD, RsxE and RsxG. [4Fe-4S] cluster is required as a cofactor.

Its subcellular location is the cell inner membrane. Its function is as follows. Part of a membrane-bound complex that couples electron transfer with translocation of ions across the membrane. Required to maintain the reduced state of SoxR. The chain is Ion-translocating oxidoreductase complex subunit C from Escherichia coli O127:H6 (strain E2348/69 / EPEC).